The sequence spans 385 residues: uncharacterized protein (385 aa).

9 helical membrane-spanning segments follow: residues 12–32 (GVAI…PKAA), 50–70 (WAFL…LLFG), 90–110 (LLVL…ILLA), 132–152 (FNTG…LGLI), 195–215 (LALG…GAAL), 233–253 (TGFV…ALQW), 272–292 (LSAP…WPQL), 312–332 (YLLQ…FMHF), and 335–355 (LELL…SVIW).

It to B.subtilis YxaH and YrkO.

The protein localises to the cell membrane. In terms of biological role, involved in transport. This is an uncharacterized protein from Escherichia coli (strain K12).